Consider the following 293-residue polypeptide: Ribosomal protein L11 methyltransferase (293 aa).

Residues T145, G166, D188, and N230 each contribute to the S-adenosyl-L-methionine site.

The protein belongs to the methyltransferase superfamily. PrmA family.

The protein resides in the cytoplasm. It carries out the reaction L-lysyl-[protein] + 3 S-adenosyl-L-methionine = N(6),N(6),N(6)-trimethyl-L-lysyl-[protein] + 3 S-adenosyl-L-homocysteine + 3 H(+). Methylates ribosomal protein L11. The polypeptide is Ribosomal protein L11 methyltransferase (Erwinia tasmaniensis (strain DSM 17950 / CFBP 7177 / CIP 109463 / NCPPB 4357 / Et1/99)).